We begin with the raw amino-acid sequence, 215 residues long: Large ribosomal subunit protein bL25 (215 aa).

Residues 192 to 203 (EEATEEEEEAAE) are compositionally biased toward acidic residues. Residues 192 to 215 (EEATEEEEEAAEPEVIKRKEEEEE) are disordered. Residues 205–215 (EVIKRKEEEEE) are compositionally biased toward basic and acidic residues.

This sequence belongs to the bacterial ribosomal protein bL25 family. CTC subfamily. As to quaternary structure, part of the 50S ribosomal subunit; part of the 5S rRNA/L5/L18/L25 subcomplex. Contacts the 5S rRNA. Binds to the 5S rRNA independently of L5 and L18.

Functionally, this is one of the proteins that binds to the 5S RNA in the ribosome where it forms part of the central protuberance. In Thermotoga maritima (strain ATCC 43589 / DSM 3109 / JCM 10099 / NBRC 100826 / MSB8), this protein is Large ribosomal subunit protein bL25.